We begin with the raw amino-acid sequence, 382 residues long: uncharacterized protein (382 aa).

Transmembrane regions (helical) follow at residues 14–34 (GLLL…LWLA), 45–65 (VVSS…GYVI), 79–99 (FIFA…SWLA), 102–122 (FVAG…LMCS), 131–151 (LLAA…LLVS), 157–177 (LMSV…PLLF), 204–224 (LGVN…GLMP), 235–255 (ASIG…QWPI), 270–290 (VQVF…AMAP), 291–311 (ALFI…AWAC), 325–345 (ALLL…AMLM), and 348–368 (FSDN…LLML).

The protein belongs to the major facilitator superfamily. YcaD (TC 2.A.1.26) family.

It is found in the cell inner membrane. This is an uncharacterized protein from Escherichia coli (strain K12 / MC4100 / BW2952).